The chain runs to 513 residues: Laccase (513 aa).

Plastocyanin-like domains follow at residues proline 45–phenylalanine 81, lysine 101–lysine 178, tryptophan 240–asparagine 318, and glutamine 378–threonine 509. Histidine 105, histidine 107, histidine 153, and histidine 155 together coordinate Cu cation. Residues histidine 419, histidine 422, histidine 424, histidine 491, cysteine 492, histidine 493, histidine 497, and methionine 502 each contribute to the Cu cation site.

Belongs to the multicopper oxidase family. As to quaternary structure, monomer. It depends on Cu(2+) as a cofactor.

Its subcellular location is the spore coat. The enzyme catalyses 4 hydroquinone + O2 = 4 benzosemiquinone + 2 H2O. It catalyses the reaction 2 (4Z,15Z)-bilirubin IXalpha + O2 = 2 biliverdin IXalpha + 2 H2O. Inhibited by azide. In terms of biological role, multicopper oxidase that catalyzes the oxidation of a variety of substrates, including phenolic and non-phenolic compounds. Substrates include syringaldazine (SGZ), 2,6-dimethoxyphenol (2,6-DMP) and the non-phenolic compound 2,2'-azino-bis(3-ethylbenzothiazoline-6-sulfonic acid) (ABTS). Has no tyrosinase activity. Is implicated in the biosynthesis of a brownish pigment that characterizes sporulating colonies of B.subtilis, and which appears to be a melanin-like product and to confer protection against UV light. Functionally, in vitro, also shows strong bilirubin oxidase (BOD) activity, and can catalyze the oxidation of free bilirubin (UB), direct bilirubin (conjugated with glucuronic acid, DB) and ditaurobilirubin. The polypeptide is Laccase (Bacillus subtilis (strain 168)).